Reading from the N-terminus, the 117-residue chain is ATP-dependent Clp protease adapter protein ClpS 1 (117 aa).

It belongs to the ClpS family. In terms of assembly, binds to the N-terminal domain of the chaperone ClpA.

In terms of biological role, involved in the modulation of the specificity of the ClpAP-mediated ATP-dependent protein degradation. This chain is ATP-dependent Clp protease adapter protein ClpS 1, found in Agrobacterium fabrum (strain C58 / ATCC 33970) (Agrobacterium tumefaciens (strain C58)).